A 547-amino-acid polypeptide reads, in one-letter code: MDTFTIEEIVKFDGGGGGISTINSNNDNIGIPSNTFEMIISTIQHFLDRSSSVASTIAVFVLSFILFFMFGWFYFLKILFRDYEVKKVFVQLSFSITFALSLTLFELIFFEIMDFMDREWRYRFWEFDLTLMSINLILVLPYYQFYLLVLAYGFSKRKTLFFSLVLLVLYLILFWKIGDPFPILKEYTGLVSLEMGIGRIGIVGCTVMSLLSGYGAVYVPYSYITYFLKPVKDVTITKLEKQFNHALDKIFNKKKRVVLLKRELTRRNVNNNNNNNNNYDTYNYNNNYNNNSNNNNNNNNSNNNNNNNLPIIGPIFSKIYNLWNVGYHHQLSRPIDDIKQLEREIKQLEDLNRDLFTQIHELKLERLRIQFSTTLRGKFYNWLGYFFSIYWKKKSALNIVFDRRGGMDPVTRGLDIALRYFHFQVDVTFWSQHISFILVGLMTASSIRGFLNQILKVFHEYSSSLSSNNIVLILAQVMGMYFISSVLMMRTSMPEIYTRFIVTQILGDIEFSFYHRWFDFIFIPSAIITTLALIFMSKSSTFHLNDE.

A run of 5 helical transmembrane segments spans residues 56 to 76 (TIAV…FYFL), 92 to 112 (LSFS…FFEI), 134 to 154 (INLI…AYGF), 164 to 184 (LVLL…FPIL), and 200 to 220 (IGIV…VYVP). The segment at 268–305 (NVNNNNNNNNNYDTYNYNNNYNNNSNNNNNNNNSNNNN) is disordered. Asn-290 and Asn-299 each carry an N-linked (GlcNAc...) asparagine glycan. A run of 3 helical transmembrane segments spans residues 427–447 (VTFW…ASSI), 469–489 (NIVL…VLMM), and 517–537 (WFDF…IFMS).

This sequence belongs to the Golgi pH regulator (TC 1.A.38) family.

It localises to the membrane. The protein is Golgi pH regulator homolog (gpr89) of Dictyostelium discoideum (Social amoeba).